The sequence spans 262 residues: MEGRLLLLETPGNTRMSLAYDEAIYRSFQYGDKPILRFYRHDRSVIIGYFQVAEEEVDLDYMKKNGIMLARRYTGGGAVYHDLGDLNFSVVRSSDDMDITSMFRTMNEAVVNSLRILGLDARPGELNDVSIPVNKKTDIMAGEKKIMGAAGAMRKGAKLWHAAMLVHTDLDMLSAVLKVPDEKFRDKIAKSTRERVANVTDFVDVSIDEVRNALIRGFSETLHIDFREDTITEKEESLARELFDKKYSTEEWNMGLLRKEVV.

Residues 30 to 226 (YGDKPILRFY…GFSETLHIDF (197 aa)) form the BPL/LPL catalytic domain. ATP is bound by residues Arg-72, Gly-77, Tyr-80, Asp-85, Pro-132, and Lys-135. Thr-137 and Asp-138 together coordinate Mg(2+). Residues Lys-145, Ala-149, and Ala-163 each contribute to the ATP site. Lys-145 provides a ligand contact to (R)-lipoate. Residue Ala-149 coordinates Mg(2+).

This sequence belongs to the LplA family. Heterodimer composed of LplA and LplB.

Its subcellular location is the cytoplasm. The catalysed reaction is L-lysyl-[lipoyl-carrier protein] + (R)-lipoate + ATP = N(6)-[(R)-lipoyl]-L-lysyl-[lipoyl-carrier protein] + AMP + diphosphate + H(+). Its pathway is protein modification; protein lipoylation via exogenous pathway; protein N(6)-(lipoyl)lysine from lipoate: step 1/2. It functions in the pathway protein modification; protein lipoylation via exogenous pathway; protein N(6)-(lipoyl)lysine from lipoate: step 2/2. In terms of biological role, part of a lipoate-protein ligase complex that catalyzes both the ATP-dependent activation of exogenously supplied lipoate to lipoyl-AMP and the transfer of the activated lipoyl onto the lipoyl domains of lipoate-dependent enzymes. Can also use octanoate as substrate. This chain is Lipoate-protein ligase A subunit 1 (lplA), found in Thermoplasma acidophilum (strain ATCC 25905 / DSM 1728 / JCM 9062 / NBRC 15155 / AMRC-C165).